We begin with the raw amino-acid sequence, 871 residues long: Speckle targeted PIP5K1A-regulated poly(A) polymerase (871 aa).

Residues 16–46 (FRCCLCHITTANQPSLDAHLGGRKHRHLVEL) form a Matrin-type zinc finger. Residues 56 to 128 (RSVFVSGFPR…RRLRVRPREQ (73 aa)) enclose the RRM domain. An ATP-binding site is contributed by Ser-205. Positions 216 and 218 each coordinate Mg(2+). The UTP site is built by Asp-216 and Asp-218. Positions 252–321 (QALACTPASP…QEDQGDGDQG (70 aa)) are disordered. A compositionally biased stretch (pro residues) spans 259 to 269 (ASPPDSQPPAS). Asn-392 contacts ATP. UTP-binding residues include Asn-392, Arg-414, Tyr-432, and His-547. Residues 489–547 (LSSLLAQFFSCVSCWDLRGSLLSLREGQALSVAGGLPSNLSEGLRLGPMNLQDPFDLSH) enclose the PAP-associated domain. Residues 596 to 871 (SSPSSILSAT…LPQALRNLLK (276 aa)) are KA1; binds the bulging loops of U6 snRNA but is dispensable for terminal uridylyltransferase activity. A disordered region spans residues 636–684 (GTKRLRSEGGGPGEPPQGGTSKRAKLDGQKKSCEEGPEEQQGCAGEHGE). The segment covering 659 to 669 (AKLDGQKKSCE) has biased composition (basic and acidic residues). Phosphoserine is present on Ser-748.

It belongs to the DNA polymerase type-B-like family. In terms of assembly, associates with the cleavage and polyadenylation specificity factor (CPSF) complex. Interacts with CPSF1 and CPSF3; the interaction is direct. Interacts with PIP5K1A. It depends on Mg(2+) as a cofactor. Mn(2+) is required as a cofactor. Phosphorylated by CK1 in the proline-rich (Pro-rich) region.

Its subcellular location is the nucleus. It is found in the nucleolus. The protein resides in the nucleus speckle. It carries out the reaction RNA(n) + UTP = RNA(n)-3'-uridine ribonucleotide + diphosphate. It catalyses the reaction RNA(n) + ATP = RNA(n)-3'-adenine ribonucleotide + diphosphate. With respect to regulation, adenylyltransferase activity is specifically phosphatidylinositol 4,5-bisphosphate (PtdIns(4,5)P2). Its function is as follows. Poly(A) polymerase that creates the 3'-poly(A) tail of specific pre-mRNAs. Localizes to nuclear speckles together with PIP5K1A and mediates polyadenylation of a select set of mRNAs, such as HMOX1. In addition to polyadenylation, it is also required for the 3'-end cleavage of pre-mRNAs: binds to the 3'UTR of targeted pre-mRNAs and promotes the recruitment and assembly of the CPSF complex on the 3'UTR of pre-mRNAs. In addition to adenylyltransferase activity, also has uridylyltransferase activity. However, the ATP ratio is higher than UTP in cells, suggesting that it functions primarily as a poly(A) polymerase. Acts as a specific terminal uridylyltransferase for U6 snRNA in vitro: responsible for a controlled elongation reaction that results in the restoration of the four 3'-terminal UMP-residues found in newly transcribed U6 snRNA. Not involved in replication-dependent histone mRNA degradation. In Bos taurus (Bovine), this protein is Speckle targeted PIP5K1A-regulated poly(A) polymerase (TUT1).